A 311-amino-acid chain; its full sequence is HPr kinase/phosphorylase (311 aa).

Residues H138 and K159 contribute to the active site. 153–160 (GDSGIGKS) contributes to the ATP binding site. S160 serves as a coordination point for Mg(2+). The Proton acceptor; for phosphorylation activity. Proton donor; for dephosphorylation activity role is filled by D177. Positions 201–210 (IEIRGVGIID) are important for the catalytic mechanism of both phosphorylation and dephosphorylation. E202 contributes to the Mg(2+) binding site. R243 is an active-site residue. An important for the catalytic mechanism of dephosphorylation region spans residues 264 to 269 (PVKTGR).

The protein belongs to the HPrK/P family. As to quaternary structure, homohexamer. The cofactor is Mg(2+).

It catalyses the reaction [HPr protein]-L-serine + ATP = [HPr protein]-O-phospho-L-serine + ADP + H(+). The enzyme catalyses [HPr protein]-O-phospho-L-serine + phosphate + H(+) = [HPr protein]-L-serine + diphosphate. Its function is as follows. Catalyzes the ATP- as well as the pyrophosphate-dependent phosphorylation of a specific serine residue in HPr, a phosphocarrier protein of the phosphoenolpyruvate-dependent sugar phosphotransferase system (PTS). HprK/P also catalyzes the pyrophosphate-producing, inorganic phosphate-dependent dephosphorylation (phosphorolysis) of seryl-phosphorylated HPr (P-Ser-HPr). The two antagonistic activities of HprK/P are regulated by several intracellular metabolites, which change their concentration in response to the absence or presence of rapidly metabolisable carbon sources (glucose, fructose, etc.) in the growth medium. Therefore, by controlling the phosphorylation state of HPr, HPrK/P is a sensor enzyme that plays a major role in the regulation of carbon metabolism and sugar transport: it mediates carbon catabolite repression (CCR), and regulates PTS-catalyzed carbohydrate uptake and inducer exclusion. The chain is HPr kinase/phosphorylase from Streptococcus pneumoniae (strain 70585).